The following is a 328-amino-acid chain: Arabinose 5-phosphate isomerase KdsD (328 aa).

In terms of domain architecture, SIS spans 42 to 184 (CEKMFWCKGK…AVALLKARGF (143 aa)). Residues 75–76 (GT), H82, H88, 114–123 (ALIPVLKRLH), 148–150 (KVA), T222, and D275 contribute to the substrate site. Residue H82 participates in Zn(2+) binding. The 59-residue stretch at 210–268 (MHTGDEIPHVKKTASLRDALLEVTRKNLGMTVICDDNMMIEGIFTDGDLRRVFDMGVDV) folds into the CBS 1 domain. The CBS 2 domain occupies 277 to 328 (MTPGGIRVRPGILAVEALNLMQSRHITSVMVADGDHLLGVLHMHDLLRAGVV).

The protein belongs to the SIS family. GutQ/KpsF subfamily. In terms of assembly, homotetramer.

It carries out the reaction D-arabinose 5-phosphate = D-ribulose 5-phosphate. It functions in the pathway carbohydrate biosynthesis; 3-deoxy-D-manno-octulosonate biosynthesis; 3-deoxy-D-manno-octulosonate from D-ribulose 5-phosphate: step 1/3. The protein operates within bacterial outer membrane biogenesis; lipopolysaccharide biosynthesis. Its function is as follows. Involved in the biosynthesis of 3-deoxy-D-manno-octulosonate (KDO), a unique 8-carbon sugar component of lipopolysaccharides (LPSs). Catalyzes the reversible aldol-ketol isomerization between D-ribulose 5-phosphate (Ru5P) and D-arabinose 5-phosphate (A5P). In Escherichia coli O157:H7, this protein is Arabinose 5-phosphate isomerase KdsD (kdsD).